Reading from the N-terminus, the 400-residue chain is Enoyl-[acyl-carrier-protein] reductase [NADH] 1 (400 aa).

Residues 48–53 (GASSGY), 74–75 (FE), 111–112 (DA), and 139–140 (LA) each bind NAD(+). Y225 provides a ligand contact to substrate. Y235 functions as the Proton donor in the catalytic mechanism. Residues K244 and 273-275 (VVT) contribute to the NAD(+) site.

This sequence belongs to the TER reductase family. Monomer.

The catalysed reaction is a 2,3-saturated acyl-[ACP] + NAD(+) = a (2E)-enoyl-[ACP] + NADH + H(+). Its pathway is lipid metabolism; fatty acid biosynthesis. Its function is as follows. Involved in the final reduction of the elongation cycle of fatty acid synthesis (FAS II). Catalyzes the reduction of a carbon-carbon double bond in an enoyl moiety that is covalently linked to an acyl carrier protein (ACP). The protein is Enoyl-[acyl-carrier-protein] reductase [NADH] 1 of Vibrio vulnificus (strain YJ016).